The primary structure comprises 370 residues: Gap junction delta-4 protein (370 aa).

Residues 1–19 are Cytoplasmic-facing; that stretch reads MEGVDLLGFLIITLNCNVT. The chain crosses the membrane as a helical span at residues 20–40; that stretch reads MXGKLWFVLTMLLRMLVIVLA. Over 41–76 the chain is Extracellular; it reads GRPVYQDEQERFVCNTLQPGCANVCYDVFSPVSHLR. The helical transmembrane segment at 77–97 threads the bilayer; it reads FWLIQGVCVLLPSAVFSVYVL. Topologically, residues 98–146 are cytoplasmic; the sequence is HRGATLAALGPRRCPEPRDTASGQRRCPGSCRERGGLEVPDFSAGYIIH. Residues 147–167 form a helical membrane-spanning segment; the sequence is LLLRTLLEAAFGALNYLLFGF. Topologically, residues 168–196 are extracellular; the sequence is LAPNKFPCTRPPCTGVVDCYVSRPTEKSL. A helical membrane pass occupies residues 197–217; that stretch reads LMLFLWAVSALSFLLGLADLV. The Cytoplasmic portion of the chain corresponds to 218–370; the sequence is CSLRRLMRRR…HLRARKSEWV (153 aa). A disordered region spans residues 227-370; sequence RPGPPTSPSI…HLRARKSEWV (144 aa). Basic and acidic residues predominate over residues 246–260; sequence PEGRPTDKEGGREQE. Positions 331–345 are enriched in low complexity; that stretch reads PSAAPSHLAAHPSCS.

The protein belongs to the connexin family. Delta-type subfamily. A connexon is composed of a hexamer of connexins.

Its subcellular location is the cell membrane. It is found in the cell junction. The protein resides in the gap junction. One gap junction consists of a cluster of closely packed pairs of transmembrane channels, the connexons, through which materials of low MW diffuse from one cell to a neighboring cell. The polypeptide is Gap junction delta-4 protein (GJD4) (Macaca fascicularis (Crab-eating macaque)).